The primary structure comprises 519 residues: Exodeoxyribonuclease 7 large subunit (519 aa).

A disordered region spans residues 500–519; sequence VGRGKTRKPKEEPPAQGSLL.

This sequence belongs to the XseA family. Heterooligomer composed of large and small subunits.

It localises to the cytoplasm. It catalyses the reaction Exonucleolytic cleavage in either 5'- to 3'- or 3'- to 5'-direction to yield nucleoside 5'-phosphates.. Its function is as follows. Bidirectionally degrades single-stranded DNA into large acid-insoluble oligonucleotides, which are then degraded further into small acid-soluble oligonucleotides. This chain is Exodeoxyribonuclease 7 large subunit, found in Cereibacter sphaeroides (strain ATCC 17029 / ATH 2.4.9) (Rhodobacter sphaeroides).